Reading from the N-terminus, the 86-residue chain is Large ribosomal subunit protein bL27 (86 aa).

The segment covering 1–10 (MAQKKGGGST) has biased composition (gly residues). The disordered stretch occupies residues 1–21 (MAQKKGGGSTRNGRDSESKRL).

This sequence belongs to the bacterial ribosomal protein bL27 family.

The protein is Large ribosomal subunit protein bL27 of Bordetella petrii (strain ATCC BAA-461 / DSM 12804 / CCUG 43448).